The chain runs to 398 residues: Tyrosine--tRNA ligase (398 aa).

Residues Pro48 to His57 carry the 'HIGH' region motif. A 'KMSKS' region motif is present at residues Lys235–Ser239. Lys238 contacts ATP. Positions Val334–Pro398 constitute an S4 RNA-binding domain.

This sequence belongs to the class-I aminoacyl-tRNA synthetase family. TyrS type 2 subfamily. In terms of assembly, homodimer.

It localises to the cytoplasm. It carries out the reaction tRNA(Tyr) + L-tyrosine + ATP = L-tyrosyl-tRNA(Tyr) + AMP + diphosphate + H(+). In terms of biological role, catalyzes the attachment of tyrosine to tRNA(Tyr) in a two-step reaction: tyrosine is first activated by ATP to form Tyr-AMP and then transferred to the acceptor end of tRNA(Tyr). The chain is Tyrosine--tRNA ligase from Nostoc sp. (strain PCC 7120 / SAG 25.82 / UTEX 2576).